The following is a 364-amino-acid chain: FNIP repeat-containing protein DDB_G0277323 (364 aa).

5 FNIP repeats span residues Met-57–Tyr-98, Tyr-155–Thr-198, Leu-214–Ser-244, Phe-245–Ile-271, and Phe-295–Asn-340.

The chain is FNIP repeat-containing protein DDB_G0277323 from Dictyostelium discoideum (Social amoeba).